Reading from the N-terminus, the 228-residue chain is MQHVAIIMDGNGRWAERRGLRRSAGHRRGLQTAREIVAALCAIRVPFVTLYVFSTENWKRSAHEVHFLMNLIRWYLKKEMSFYVEHAIRVVHLGCAQTLPPDVRSQIEYVVERTRSHRGTTVALAINYGGKDEILRAVKKVLCSTSCPDGELLTEEAFGACLDAPQLPSVDFLIRTGGQQRMSNFLLWQSAYAEFYFTDILWPDFRVEDMLRALDEYRLRTRTFGGLE.

Asp9 is a catalytic residue. Asp9 is a Mg(2+) binding site. Residues 10–13, Trp14, Arg22, His26, and 54–56 each bind substrate; these read GNGR and STE. Catalysis depends on Asn57, which acts as the Proton acceptor. Substrate is bound by residues Trp58, Arg60, Arg175, and 181-183; that span reads RMS. Glu194 is a Mg(2+) binding site.

This sequence belongs to the UPP synthase family. Homodimer. It depends on Mg(2+) as a cofactor.

In terms of biological role, catalyzes the condensation of isopentenyl diphosphate (IPP) with allylic pyrophosphates generating different type of terpenoids. In Treponema pallidum (strain Nichols), this protein is Isoprenyl transferase.